We begin with the raw amino-acid sequence, 143 residues long: AP-2 complex subunit sigma (143 aa).

This sequence belongs to the adaptor complexes small subunit family. In terms of assembly, adaptor protein complex 2 (AP-2) is a heterotetramer composed of two large adaptins (alpha-type subunit APL3 and beta-type subunit APL1), a medium chain (mu-type subunit APM4) and a small adaptin (sigma-type subunit APS2).

The protein localises to the cell membrane. It localises to the membrane. It is found in the coated pit. Its function is as follows. Component of the adaptor complexes which link clathrin to receptors in coated vesicles. Clathrin-associated protein complexes are believed to interact with the cytoplasmic tails of membrane proteins, leading to their selection and concentration. This is AP-2 complex subunit sigma (aps-2) from Neurospora crassa (strain ATCC 24698 / 74-OR23-1A / CBS 708.71 / DSM 1257 / FGSC 987).